Consider the following 375-residue polypeptide: Deoxyribonuclease-2 (375 aa).

The first 21 residues, 1–21 (MGLSPAAVLIFLLLGVSQTYA), serve as a signal peptide directing secretion. Asparagine 131 carries an N-linked (GlcNAc...) asparagine glycan.

The protein belongs to the DNase II family.

The enzyme catalyses Endonucleolytic cleavage to nucleoside 3'-phosphates and 3'-phosphooligonucleotide end-products.. In terms of biological role, hydrolyzes DNA under acidic conditions with a preference for double-stranded DNA. Implicated in apoptosis. In Caenorhabditis elegans, this protein is Deoxyribonuclease-2 (nuc-1).